We begin with the raw amino-acid sequence, 261 residues long: UPF0246 protein PMI0005 (261 aa).

The protein belongs to the UPF0246 family.

This chain is UPF0246 protein PMI0005, found in Proteus mirabilis (strain HI4320).